Consider the following 431-residue polypeptide: MYRFAPSPTGDMHIGNLRAAIFNYICARQKNMDFILRIEDTDKARNIAGKEEEIKEILNLFSISWQHYYIQSENLKFHRQMALKLVSEKKAFACFCTEEELEAKKELAKKQGKAYRYDGTCEKLADIDVLECEKPFVIRLKKPTHTMKFTDFIKGELSFEPENIDSFVIMRTDKTPTYNFACAVDDMLENVTCIIRGEDHVSNTPKQEHIRASLGYNKAMTYAHLPIILNEEGVKMSKREAHSSVKWLLESGILPSAIANYLIMLGNKTPCEIFTLEEAIKWFDISKVSKAPARFDLKKLLQINREHIKMIKDDELNKILDLNKDLAQLAKFYTQETSTIKELKEKMQAIFNAKDFGEFETEYKILKELLKDIELFENYEDFKNELLNKSNLKGKKFFMPLRIILTGNIHGPELSDLYPYIKNFIHELARI.

The 'HIGH' region signature appears at 6–16 (PSPTGDMHIGN). The short motif at 235-239 (KMSKR) is the 'KMSKS' region element. Residue K238 participates in ATP binding.

The protein belongs to the class-I aminoacyl-tRNA synthetase family. Glutamate--tRNA ligase type 1 subfamily. In terms of assembly, monomer.

It is found in the cytoplasm. It catalyses the reaction tRNA(Glu) + L-glutamate + ATP = L-glutamyl-tRNA(Glu) + AMP + diphosphate. Catalyzes the attachment of glutamate to tRNA(Glu) in a two-step reaction: glutamate is first activated by ATP to form Glu-AMP and then transferred to the acceptor end of tRNA(Glu). The chain is Glutamate--tRNA ligase 1 from Campylobacter jejuni subsp. jejuni serotype O:2 (strain ATCC 700819 / NCTC 11168).